The following is a 330-amino-acid chain: Phenylalanine--tRNA ligase alpha subunit (330 aa).

E246 provides a ligand contact to Mg(2+).

It belongs to the class-II aminoacyl-tRNA synthetase family. Phe-tRNA synthetase alpha subunit type 1 subfamily. Tetramer of two alpha and two beta subunits. Mg(2+) is required as a cofactor.

It is found in the cytoplasm. It carries out the reaction tRNA(Phe) + L-phenylalanine + ATP = L-phenylalanyl-tRNA(Phe) + AMP + diphosphate + H(+). The chain is Phenylalanine--tRNA ligase alpha subunit from Sulfurimonas denitrificans (strain ATCC 33889 / DSM 1251) (Thiomicrospira denitrificans (strain ATCC 33889 / DSM 1251)).